Here is a 573-residue protein sequence, read N- to C-terminus: MVQHELAAEIARQILLGFDDYREHFRLITEGARARFEQAQWQEAQRASAARISLYEEKVGETRRRLLASFDHADLLQVEAWPQIKSAYIELINPRFDDELSETWYNSIFCGLFSHDCISDGTMFIHTTRPAVRAHERLAQTRRYRPNGDLRGMLEQILRDYAFSVPYCDLPGDLQRLQTQLCETLPDWVCKDPELTVEVFVSVLYRNKGAYLIGRIFTCDEQWPLAIPLLHRDGQGIVADALITDEAEVSIIFSFTRSYFMVEVPIPAEFVGFLKRILPGKHIAELYSSIGFYKHGKSEFYRALIDHLANTDDRFVMAPGVRGMVMTVFTLPGFNTVFKLIKDRFSPIKSVNRANVIEKYRLVKSVDRVGRMADTQEFADFRFPKAKFEPECLAELLEVAPSTVEVQGDTVLVRHCWTERRMTPLNLYLENASEQQVREALEDYGLAIKQLAAANIFPGDMLLKNFGVTRHGRVVFYDYDEISFLTEVNFRHIPPPRYPEDEMASEPWYSVGPNDVFPEEFPRFLFADLGQRRLFASLHGELYDADYWKGLQDAIRQGKVIDVFPYRRKADRN.

Residues 318 to 324 and K339 contribute to the ATP site; that span reads APGVRGM. The active site involves D374.

It belongs to the AceK family.

The protein resides in the cytoplasm. It catalyses the reaction L-seryl-[isocitrate dehydrogenase] + ATP = O-phospho-L-seryl-[isocitrate dehydrogenase] + ADP + H(+). Functionally, bifunctional enzyme which can phosphorylate or dephosphorylate isocitrate dehydrogenase (IDH) on a specific serine residue. This is a regulatory mechanism which enables bacteria to bypass the Krebs cycle via the glyoxylate shunt in response to the source of carbon. When bacteria are grown on glucose, IDH is fully active and unphosphorylated, but when grown on acetate or ethanol, the activity of IDH declines drastically concomitant with its phosphorylation. This Stutzerimonas stutzeri (strain A1501) (Pseudomonas stutzeri) protein is Isocitrate dehydrogenase kinase/phosphatase.